The primary structure comprises 181 residues: Adenine phosphoribosyltransferase (181 aa).

The protein belongs to the purine/pyrimidine phosphoribosyltransferase family. As to quaternary structure, homodimer.

It localises to the cytoplasm. It carries out the reaction AMP + diphosphate = 5-phospho-alpha-D-ribose 1-diphosphate + adenine. It functions in the pathway purine metabolism; AMP biosynthesis via salvage pathway; AMP from adenine: step 1/1. Its function is as follows. Catalyzes a salvage reaction resulting in the formation of AMP, that is energically less costly than de novo synthesis. This is Adenine phosphoribosyltransferase from Vibrio atlanticus (strain LGP32) (Vibrio splendidus (strain Mel32)).